Reading from the N-terminus, the 166-residue chain is Cold-inducible RNA-binding protein (166 aa).

The region spanning 6–84 (GKLFVGGLNF…RQIRVDQAGK (79 aa)) is the RRM domain. The interval 68-166 (NGKSVDGRQI…DSYDSYTTQE (99 aa)) is disordered. Residues 93-120 (YRGGSSGGRGFFRGGRGRGGGGDRGYGG) are compositionally biased toward gly residues. Over residues 121–166 (SSRFENRSGGYQSSGSRDYYGRSHGSYGDRSGGSYRDSYDSYTTQE) the composition is skewed to low complexity.

In terms of assembly, interacts with prmt1. Interacts with elavl1/elrA (via RRM3). Associates with ribosomes. Post-translationally, methylated on arginine residues within RGG motifs. Methylation by prmt1 promotes cytoplasmic accumulation.

Its subcellular location is the nucleus. It localises to the nucleoplasm. It is found in the cytoplasm. In terms of biological role, cold-inducible mRNA binding protein. Acts cooperatively with elavl1/elrA to stabilize AU-rich element (ARE)-containing mRNAs by binding to themm and inhibiting their deadenylation. Essential for embryonic gastrulation and neural development, acting to maintain the expression of a set of adhesion molecules, and cell movement during embryogenesis. Required for pronephros development. The chain is Cold-inducible RNA-binding protein from Xenopus tropicalis (Western clawed frog).